We begin with the raw amino-acid sequence, 637 residues long: Chaperone protein HtpG (637 aa).

Residues 1–328 (MADIEELKFD…SSDLPLNISR (328 aa)) form an a; substrate-binding region. Residues 329–556 (ETLQNNRIVE…DNSMDIRMER (228 aa)) form a b region. Positions 488 to 508 (IGASDDSGDKTSEDSGESASD) are disordered. The segment covering 494-508 (SGDKTSEDSGESASD) has biased composition (basic and acidic residues). The segment at 557-637 (FLREQKQLNY…GVLAKIFSSK (81 aa)) is c.

The protein belongs to the heat shock protein 90 family. Homodimer.

It is found in the cytoplasm. In terms of biological role, molecular chaperone. Has ATPase activity. The sequence is that of Chaperone protein HtpG from Anaplasma phagocytophilum (strain HZ).